The primary structure comprises 262 residues: Cell division protein ZapD (262 aa).

Belongs to the ZapD family. As to quaternary structure, interacts with FtsZ.

It localises to the cytoplasm. In terms of biological role, cell division factor that enhances FtsZ-ring assembly. Directly interacts with FtsZ and promotes bundling of FtsZ protofilaments, with a reduction in FtsZ GTPase activity. This Nitrosomonas europaea (strain ATCC 19718 / CIP 103999 / KCTC 2705 / NBRC 14298) protein is Cell division protein ZapD.